We begin with the raw amino-acid sequence, 445 residues long: FAS-associated factor 2 (445 aa).

Ala2 carries the N-acetylalanine modification. Residues 12–48 (EQTEKLLQFQDLTGIESMDQCRHTLEQHNWNIEAAVQ) form the UBA domain. The residue at position 167 (Lys167) is an N6-acetyllysine. The stretch at 275 to 350 (SERLEREERN…EEKERKLECL (76 aa)) forms a coiled coil. The disordered stretch occupies residues 299–361 (ASLRADQEKE…PEPSPDDPES (63 aa)). Positions 303-348 (ADQEKERKKREERERKRRKEEEVQQQKLAEERRRRNLQEEKERKLE) are enriched in basic and acidic residues. A UBX domain is found at 357–439 (DDPESVKIIF…GLSHTEVLFV (83 aa)).

As to quaternary structure, identified in a complex that contains SEL1L, OS9, FAF2/UBXD8, UBE2J1/UBC6E and AUP1. Interacts with YOD1. Interacts (via N-terminus) with UBQLN2 (via C-terminus). Interacts with PNPLA2 and UBAC2. Interacts with ZFAND2B; probably through VCP. Interacts with LMBR1L.

It localises to the cytoplasm. The protein localises to the lipid droplet. Its subcellular location is the endoplasmic reticulum. Plays an important role in endoplasmic reticulum-associated degradation (ERAD) that mediates ubiquitin-dependent degradation of misfolded endoplasmic reticulum proteins. By controlling the steady-state expression of the IGF1R receptor, indirectly regulates the insulin-like growth factor receptor signaling pathway. Involved in inhibition of lipid droplet degradation by binding to phospholipase PNPL2 and inhibiting its activity by promoting dissociation of PNPL2 from its endogenous activator, ABHD5 which inhibits the rate of triacylglycerol hydrolysis. Involved in stress granule disassembly: associates with ubiquitinated G3BP1 in response to heat shock, thereby promoting interaction between ubiquitinated G3BP1 and VCP, followed by G3BP1 extraction from stress granules and stress granule disassembly. In Bos taurus (Bovine), this protein is FAS-associated factor 2 (FAF2).